The chain runs to 810 residues: Actin-regulating kinase PRK1 (810 aa).

The Protein kinase domain maps to 22 to 298 (AKIIKYLTSG…CQVLEEVSRL (277 aa)). Residues 28-36 (LTSGGFAQV) and K56 each bind ATP. D158 (proton acceptor) is an active-site residue. 3 positions are modified to phosphoserine: S402, S428, and S484. 2 disordered regions span residues 552 to 668 (FTGN…NVNI) and 733 to 761 (GVLDIKTKSNGKDKSRPPRPPPKPLHLRT). Phosphothreonine is present on T553. Residues 553-566 (TGNSVNNSRSASFD) show a composition bias toward polar residues. The residue at position 556 (S556) is a Phosphoserine. The span at 567 to 588 (NNNVNGNGNNTNRRLVSSSTSS) shows a compositional bias: low complexity. Composition is skewed to basic and acidic residues over residues 594–612 (SDTKRKEESDKNQRLEKRR) and 622–639 (FDQHERNNSRTGSRDYYR). Low complexity predominate over residues 645 to 658 (KKTQASAKTTSKPT). Residues 733-748 (GVLDIKTKSNGKDKSR) are compositionally biased toward basic and acidic residues. The interaction with SH3 domain of ABP1 stretch occupies residues 743 to 756 (GKDKSRPPRPPPKP).

The protein belongs to the protein kinase superfamily. Ser/Thr protein kinase family. Interacts with ABP1, which is required for proper actin patch localization.

It is found in the cytoplasm. Its subcellular location is the cytoskeleton. The protein localises to the actin patch. The catalysed reaction is L-seryl-[protein] + ATP = O-phospho-L-seryl-[protein] + ADP + H(+). The enzyme catalyses L-threonyl-[protein] + ATP = O-phospho-L-threonyl-[protein] + ADP + H(+). Protein kinase involved in the regulation of actin cytoskeleton organization and endocytosis. Phosphorylates PAN1 which disrupts the interaction between PAN1 and END3, and between PAN1 and SLA1. Phosphorylates SCD5. Preferentially, phosphorylates substrates on threonine residues in a [L/I/V/M]-x-x-[Q/N/T/S]-x-T-G motif. The protein is Actin-regulating kinase PRK1 (PRK1) of Saccharomyces cerevisiae (strain ATCC 204508 / S288c) (Baker's yeast).